The primary structure comprises 193 residues: dCTP deaminase (193 aa).

DCTP contacts are provided by residues 110-115 (RSSLAR), Asp-128, 136-138 (VLE), Tyr-171, Lys-178, and Gln-182. Glu-138 acts as the Proton donor/acceptor in catalysis. Residues 173–193 (KRKNAKYKDQQDAVASRISQD) form a disordered region.

This sequence belongs to the dCTP deaminase family. As to quaternary structure, homotrimer.

The catalysed reaction is dCTP + H2O + H(+) = dUTP + NH4(+). The protein operates within pyrimidine metabolism; dUMP biosynthesis; dUMP from dCTP (dUTP route): step 1/2. Functionally, catalyzes the deamination of dCTP to dUTP. This Shewanella sp. (strain ANA-3) protein is dCTP deaminase.